We begin with the raw amino-acid sequence, 236 residues long: Probable sulfate/thiosulfate import ATP-binding protein CysA (236 aa).

The region spanning 3–233 (ILIENISKRF…PTNTFVTNFL (231 aa)) is the ABC transporter domain. 35–42 (GPSGSGKS) lines the ATP pocket.

It belongs to the ABC transporter superfamily. Sulfate/tungstate importer (TC 3.A.1.6) family.

It localises to the plastid. The protein localises to the chloroplast. It carries out the reaction sulfate(out) + ATP + H2O = sulfate(in) + ADP + phosphate + H(+). The enzyme catalyses thiosulfate(out) + ATP + H2O = thiosulfate(in) + ADP + phosphate + H(+). Its function is as follows. Part of the ABC transporter complex involved in sulfate/thiosulfate import. Responsible for energy coupling to the transport system. The sequence is that of Probable sulfate/thiosulfate import ATP-binding protein CysA from Chlorella vulgaris (Green alga).